Consider the following 96-residue polypeptide: Co-chaperonin GroES (96 aa).

This sequence belongs to the GroES chaperonin family. In terms of assembly, heptamer of 7 subunits arranged in a ring. Interacts with the chaperonin GroEL.

It localises to the cytoplasm. Functionally, together with the chaperonin GroEL, plays an essential role in assisting protein folding. The GroEL-GroES system forms a nano-cage that allows encapsulation of the non-native substrate proteins and provides a physical environment optimized to promote and accelerate protein folding. GroES binds to the apical surface of the GroEL ring, thereby capping the opening of the GroEL channel. The polypeptide is Co-chaperonin GroES (Shewanella denitrificans (strain OS217 / ATCC BAA-1090 / DSM 15013)).